Reading from the N-terminus, the 157-residue chain is Transcription elongation factor GreA (157 aa).

Positions 47–75 form a coiled coil; sequence SGEYEDAKKAQALLEGRIRELKHLLSRAE.

The protein belongs to the GreA/GreB family.

Its function is as follows. Necessary for efficient RNA polymerase transcription elongation past template-encoded arresting sites. The arresting sites in DNA have the property of trapping a certain fraction of elongating RNA polymerases that pass through, resulting in locked ternary complexes. Cleavage of the nascent transcript by cleavage factors such as GreA or GreB allows the resumption of elongation from the new 3'terminus. GreA releases sequences of 2 to 3 nucleotides. In Chloroflexus aggregans (strain MD-66 / DSM 9485), this protein is Transcription elongation factor GreA.